A 166-amino-acid chain; its full sequence is Probable DHNTP pyrophosphohydrolase (166 aa).

In terms of domain architecture, Nudix hydrolase spans 42 to 166 (DLQLSASALV…FKKYYRYKNI (125 aa)). The Nudix box motif lies at 73–94 (GHVELKESPLDTAIREFHEETG). The Mg(2+) site is built by glutamate 88 and glutamate 92.

It belongs to the Nudix hydrolase family. Monomer. It depends on Mg(2+) as a cofactor.

It participates in cofactor biosynthesis; tetrahydrofolate biosynthesis; 2-amino-4-hydroxy-6-hydroxymethyl-7,8-dihydropteridine diphosphate from 7,8-dihydroneopterin triphosphate: step 1/4. Its function is as follows. Probably mediates the removal of pyrophosphate from dihydroneopterin triphosphate (DHNTP), a possible step in the pterin branch of the folate synthesis pathway. The sequence is that of Probable DHNTP pyrophosphohydrolase (folQ) from Lactococcus lactis subsp. cremoris (strain MG1363).